The sequence spans 295 residues: Ribosomal protein L11 methyltransferase (295 aa).

Positions 146, 167, 189, and 231 each coordinate S-adenosyl-L-methionine.

The protein belongs to the methyltransferase superfamily. PrmA family.

It is found in the cytoplasm. It catalyses the reaction L-lysyl-[protein] + 3 S-adenosyl-L-methionine = N(6),N(6),N(6)-trimethyl-L-lysyl-[protein] + 3 S-adenosyl-L-homocysteine + 3 H(+). Methylates ribosomal protein L11. The sequence is that of Ribosomal protein L11 methyltransferase from Vibrio vulnificus (strain CMCP6).